The following is an 880-amino-acid chain: MOG interacting and ectopic P-granules protein 1 (880 aa).

The span at 1–20 (MVTSDETVLATTTNKTSITT) shows a compositional bias: polar residues. Disordered regions lie at residues 1–37 (MVTSDETVLATTTNKTSITTEPMEPKSSDESTDSETD), 82–257 (DKVE…DDNE), and 350–370 (ERPKLSDSEKRERQQMKQHNP). Residues 23-37 (MEPKSSDESTDSETD) show a composition bias toward basic and acidic residues. Over residues 87 to 105 (ATNSVVDLSSNGSSATTSV) the composition is skewed to polar residues. Residues 108–120 (EEQEEKANEDETN) are compositionally biased toward acidic residues. Basic and acidic residues-rich tracts occupy residues 154–170 (SKSDGETETDRVAIKDS) and 183–193 (KPEEKEEKNDT). Residues 215–224 (QLDDDDDDIQ) are compositionally biased toward acidic residues. 2 stretches are compositionally biased toward basic and acidic residues: residues 235–252 (QKTEETKQEPKQEAKAEP) and 350–364 (ERPKLSDSEKRERQQ). 2 C2H2-type zinc fingers span residues 436 to 459 (SRCGVCGFQTESKLAMAAHKETLH) and 465 to 488 (FQCTLCKETDTNEQRMKEHYFEAH). A CCHC-type zinc finger spans residues 501 to 523 (YPCAICEEDFNFKGVREQHYKQC). 4 C2H2-type zinc fingers span residues 728–751 (FQCEICDQTVHEKDKYLSHLQVLH), 768–791 (LACSRCRDRFWTYEGLERHLVMSH), 809–830 (GRCKTCGKQYAFNMLQHLVADH), and 841–864 (YSCDVCAFKCSSYQTLEAHLSSTH).

In terms of assembly, interacts with hda-1, let-418, lin-1, mog-1, mog-4, mog-5, mog-6, pie-1 and unc-98.

Its subcellular location is the nucleus. Its function is as follows. Has a broad role in development, specifically in the genetic pathway SynMuvB that negatively regulates specification of the vulval cell fate. Required for fem-3 3'-UTR-mediated repression in the regulation of the sperm/oocyte switch. Acts by regulating the translation of fem-3 mRNA, by binding to its 3'-UTR. The protein is MOG interacting and ectopic P-granules protein 1 of Caenorhabditis briggsae.